The chain runs to 128 residues: Putative protein SEM1, isoform 2 (128 aa).

Positions 22–32 (KHGIKRGRRPS) are enriched in basic residues. A disordered region spans residues 22 to 42 (KHGIKRGRRPSIRSPAQRARG).

This Homo sapiens (Human) protein is Putative protein SEM1, isoform 2.